A 374-amino-acid polypeptide reads, in one-letter code: Cell division protein DivIB (374 aa).

The segment at 1–90 (MWKISNENDI…EEEHFADRLP (90 aa)) is disordered. Over 1–103 (MWKISNENDI…KTRNKRLYRR (103 aa)) the chain is Cytoplasmic. A compositionally biased stretch (basic and acidic residues) spans 39–53 (YLKKQAEEAASKGEN). The span at 56–75 (AEVTITLQEQSQEEPQQHLP) shows a compositional bias: polar residues. A helical transmembrane segment spans residues 104 to 124 (LAFILTCLGTAILVALYFVSP). At 125-374 (LSRLSEVTVS…GENQEVQQAE (250 aa)) the chain is on the extracellular side. Residues 126-197 (SRLSEVTVSG…NSFKIDIQEY (72 aa)) form the POTRA domain. Positions 325-374 (KESEETGSEVSEDSAVENQEVVDPNAGVATDGANNGTPTNGENQEVQQAE) are disordered. Residues 326 to 339 (ESEETGSEVSEDSA) are compositionally biased toward acidic residues. The segment covering 356-374 (GANNGTPTNGENQEVQQAE) has biased composition (polar residues).

The protein belongs to the FtsQ/DivIB family. DivIB subfamily.

It is found in the cell membrane. Functionally, cell division protein that may be involved in stabilizing or promoting the assembly of the division complex. The polypeptide is Cell division protein DivIB (Enterococcus faecalis (strain 62)).